The primary structure comprises 195 residues: Imidazoleglycerol-phosphate dehydratase (195 aa).

Belongs to the imidazoleglycerol-phosphate dehydratase family.

It localises to the cytoplasm. It carries out the reaction D-erythro-1-(imidazol-4-yl)glycerol 3-phosphate = 3-(imidazol-4-yl)-2-oxopropyl phosphate + H2O. The protein operates within amino-acid biosynthesis; L-histidine biosynthesis; L-histidine from 5-phospho-alpha-D-ribose 1-diphosphate: step 6/9. This is Imidazoleglycerol-phosphate dehydratase from Polynucleobacter necessarius subsp. necessarius (strain STIR1).